Reading from the N-terminus, the 31-residue chain is Photosystem II reaction center protein T (31 aa).

Residues 3-23 form a helical membrane-spanning segment; sequence SVAYILVLTMALSVIFFAIAF.

The protein belongs to the PsbT family. PSII is composed of 1 copy each of membrane proteins PsbA, PsbB, PsbC, PsbD, PsbE, PsbF, PsbH, PsbI, PsbJ, PsbK, PsbL, PsbM, PsbT, PsbX, PsbY, PsbZ, Psb30/Ycf12, peripheral proteins PsbO, CyanoQ (PsbQ), PsbU, PsbV and a large number of cofactors. It forms dimeric complexes.

Its subcellular location is the cellular thylakoid membrane. Functionally, found at the monomer-monomer interface of the photosystem II (PS II) dimer, plays a role in assembly and dimerization of PSII. PSII is a light-driven water plastoquinone oxidoreductase, using light energy to abstract electrons from H(2)O, generating a proton gradient subsequently used for ATP formation. The polypeptide is Photosystem II reaction center protein T (Microcystis aeruginosa (strain NIES-843 / IAM M-2473)).